Consider the following 129-residue polypeptide: Protein yippee-like At5g53940 (129 aa).

The Yippee domain occupies Arg-12 to Ile-109. Residues Cys-16, Cys-19, Cys-72, and Cys-75 each contribute to the Zn(2+) site.

Belongs to the yippee family.

This is Protein yippee-like At5g53940 from Arabidopsis thaliana (Mouse-ear cress).